Here is a 940-residue protein sequence, read N- to C-terminus: Isoleucine--tRNA ligase (940 aa).

A 'HIGH' region motif is present at residues 58–68; sequence PYANGSIHIGH. Position 564 (Glu-564) interacts with L-isoleucyl-5'-AMP. The short motif at 605-609 is the 'KMSKS' region element; sequence KMSKS. Lys-608 contributes to the ATP binding site. 4 residues coordinate Zn(2+): Cys-903, Cys-906, Cys-923, and Cys-926.

This sequence belongs to the class-I aminoacyl-tRNA synthetase family. IleS type 1 subfamily. Monomer. Zn(2+) serves as cofactor.

Its subcellular location is the cytoplasm. The catalysed reaction is tRNA(Ile) + L-isoleucine + ATP = L-isoleucyl-tRNA(Ile) + AMP + diphosphate. In terms of biological role, catalyzes the attachment of isoleucine to tRNA(Ile). As IleRS can inadvertently accommodate and process structurally similar amino acids such as valine, to avoid such errors it has two additional distinct tRNA(Ile)-dependent editing activities. One activity is designated as 'pretransfer' editing and involves the hydrolysis of activated Val-AMP. The other activity is designated 'posttransfer' editing and involves deacylation of mischarged Val-tRNA(Ile). This chain is Isoleucine--tRNA ligase, found in Shewanella sp. (strain MR-4).